The following is a 327-amino-acid chain: tRNA dimethylallyltransferase (327 aa).

Gly14–Thr21 provides a ligand contact to ATP. Thr16 to Thr21 lines the substrate pocket. Interaction with substrate tRNA regions lie at residues Asp39–Leu42 and Gln163–Arg167.

This sequence belongs to the IPP transferase family. In terms of assembly, monomer. Mg(2+) is required as a cofactor.

It catalyses the reaction adenosine(37) in tRNA + dimethylallyl diphosphate = N(6)-dimethylallyladenosine(37) in tRNA + diphosphate. Functionally, catalyzes the transfer of a dimethylallyl group onto the adenine at position 37 in tRNAs that read codons beginning with uridine, leading to the formation of N6-(dimethylallyl)adenosine (i(6)A). The polypeptide is tRNA dimethylallyltransferase (Xanthomonas campestris pv. campestris (strain 8004)).